Reading from the N-terminus, the 608-residue chain is Extracellular metalloproteinase 5 (608 aa).

The signal sequence occupies residues M1–A20. A propeptide spanning residues H21 to H244 is cleaved from the precursor. The N-linked (GlcNAc...) asparagine glycan is linked to N285. H427 provides a ligand contact to Zn(2+). E428 is a catalytic residue. A Zn(2+)-binding site is contributed by H431. A glycan (N-linked (GlcNAc...) asparagine) is linked at N591.

The protein belongs to the peptidase M36 family. Zn(2+) is required as a cofactor.

It localises to the secreted. Functionally, secreted metalloproteinase probably acting as a virulence factor. The sequence is that of Extracellular metalloproteinase 5 (MEP5) from Trichophyton tonsurans (Scalp ringworm fungus).